Here is a 257-residue protein sequence, read N- to C-terminus: Beta-fibrinogenase mucrofibrase-1 (257 aa).

The first 18 residues, Met-1–Ala-18, serve as a signal peptide directing secretion. A propeptide spanning residues Gln-19–Leu-24 is cleaved from the precursor. The 224-residue stretch at Val-25–Ala-248 folds into the Peptidase S1 domain. 6 disulfides stabilise this stretch: Cys-31–Cys-162, Cys-49–Cys-65, Cys-97–Cys-255, Cys-141–Cys-209, Cys-173–Cys-188, and Cys-199–Cys-224. Catalysis depends on charge relay system residues His-64 and Asp-109. Residue Ser-203 is the Charge relay system of the active site.

Belongs to the peptidase S1 family. Snake venom subfamily. Monomer. As to expression, expressed by the venom gland.

The protein resides in the secreted. Snake venom serine protease with strong beta-fibrinogenolytic activities, angiotensin I (AGT)-degrading activities and strong kallikrein-like activities in vitro, releasing bradykinin from kininogen (KNG1). Intravenous injection strongly lowers blood pressure in experimental rats, which may be explained by the action on angiotensin I and kininogen. The sequence is that of Beta-fibrinogenase mucrofibrase-1 from Protobothrops mucrosquamatus (Taiwan habu).